The chain runs to 264 residues: Methylthioribulose-1-phosphate dehydratase (264 aa).

Cys110 lines the substrate pocket. Zn(2+)-binding residues include His128 and His130. The active-site Proton donor/acceptor is Glu151. His213 is a binding site for Zn(2+).

This sequence belongs to the aldolase class II family. MtnB subfamily. The cofactor is Zn(2+).

The protein localises to the cytoplasm. It catalyses the reaction 5-(methylsulfanyl)-D-ribulose 1-phosphate = 5-methylsulfanyl-2,3-dioxopentyl phosphate + H2O. It participates in amino-acid biosynthesis; L-methionine biosynthesis via salvage pathway; L-methionine from S-methyl-5-thio-alpha-D-ribose 1-phosphate: step 2/6. Catalyzes the dehydration of methylthioribulose-1-phosphate (MTRu-1-P) into 2,3-diketo-5-methylthiopentyl-1-phosphate (DK-MTP-1-P). In Vanderwaltozyma polyspora (strain ATCC 22028 / DSM 70294 / BCRC 21397 / CBS 2163 / NBRC 10782 / NRRL Y-8283 / UCD 57-17) (Kluyveromyces polysporus), this protein is Methylthioribulose-1-phosphate dehydratase.